Consider the following 143-residue polypeptide: Larval cuticle protein LCP-17 (143 aa).

The N-terminal stretch at 1 to 16 (MKFLIVLAVAVACASA) is a signal peptide. Residues 41–110 (EGHFQFNYET…PQGSHLPTPH (70 aa)) form the Chitin-binding type R&amp;R domain.

In terms of biological role, component of the cuticle of the larva of Bombyx mori. This chain is Larval cuticle protein LCP-17 (LCP17), found in Bombyx mori (Silk moth).